The chain runs to 357 residues: Solute carrier family 25 member 3 (357 aa).

The transit peptide at 1–45 directs the protein to the mitochondrion; the sequence is MFSSVAHLARANPFNAPHLQLVHDGLSGPRSPPAPPRRSRHLAAA. Residues 46–58 lie on the Mitochondrial intermembrane side of the membrane; it reads AVEEYSCEFGSMK. Solcar repeat units follow at residues 58-142, 155-239, and 256-334; these read KYYA…FKAL, WRTS…TVEA, and EQLV…VKVY. A helical membrane pass occupies residues 59–81; the sequence is YYALCGFGGVLSCGLTHTAVVPL. Over 82–116 the chain is Mitochondrial matrix; sequence DLVKCRMQVDPQKYKGIFNGFSITLKEDGVRGLAK. Residue Lys94 is modified to N6-acetyllysine. Residue Lys107 is modified to N6-methyllysine. A helical membrane pass occupies residues 117 to 136; sequence GWAPTLIGYSMQGLCKFGFY. The Mitochondrial intermembrane segment spans residues 137–156; sequence EVFKALYSNILGEENTYLWR. A helical membrane pass occupies residues 157–178; sequence TSLYLASSASAEFFADIALAPM. The Mitochondrial matrix segment spans residues 179 to 213; sequence EAAKVRIQTQPGYANTLREAVPKMYKEEGLNAFYK. Tyr191 is modified (phosphotyrosine). Lys204 bears the N6-acetyllysine mark. Residues 214 to 233 form a helical membrane-spanning segment; it reads GVAPLWMRQIPYTMMKFACF. Residues 234 to 256 lie on the Mitochondrial intermembrane side of the membrane; the sequence is ERTVEALYKFVVPKPRSECTKAE. The chain crosses the membrane as a helical span at residues 257–279; sequence QLVVTFVAGYIAGVFCAIVSHPA. Residues 280 to 309 lie on the Mitochondrial matrix side of the membrane; that stretch reads DSVVSVLNKEKGSTASQVLQRLGFRGVWKG. Residues 310–328 traverse the membrane as a helical segment; it reads LFARIIMIGTLTALQWFIY. The Mitochondrial intermembrane segment spans residues 329-357; sequence DSVKVYFRLPRPPPPEMPESLKKKLGLTE.

Belongs to the mitochondrial carrier (TC 2.A.29) family. Interacts with PPIF; the interaction is impaired by CsA.

Its subcellular location is the mitochondrion inner membrane. The enzyme catalyses phosphate(in) + H(+)(in) = phosphate(out) + H(+)(out). Its function is as follows. Inorganic ion transporter that transports phosphate or copper ions across the mitochondrial inner membrane into the matrix compartment. Mediates proton-coupled symport of phosphate ions necessary for mitochondrial oxidative phosphorylation of ADP to ATP. Transports copper ions probably in the form of anionic copper(I) complexes to maintain mitochondrial matrix copper pool and to supply copper for cytochrome C oxidase complex assembly. May also play a role in regulation of the mitochondrial permeability transition pore (mPTP). The sequence is that of Solute carrier family 25 member 3 from Mus musculus (Mouse).